The chain runs to 274 residues: Protein RecA (274 aa).

43 to 50 (GPESSGKT) is a binding site for ATP.

It belongs to the RecA family.

Its subcellular location is the cytoplasm. Functionally, can catalyze the hydrolysis of ATP in the presence of single-stranded DNA, the ATP-dependent uptake of single-stranded DNA by duplex DNA, and the ATP-dependent hybridization of homologous single-stranded DNAs. It interacts with LexA causing its activation and leading to its autocatalytic cleavage. This chain is Protein RecA, found in Neisseria polysaccharea.